Reading from the N-terminus, the 662-residue chain is DNA ligase (662 aa).

Residues 34-38 (DYDYD), 83-84 (SI), and E113 each bind NAD(+). K115 functions as the N6-AMP-lysine intermediate in the catalytic mechanism. NAD(+) is bound by residues R136, E172, K286, and K310. Zn(2+) contacts are provided by C404, C407, C422, and C427. Residues 583–662 (RESSSCLGKT…NDLLKILYPN (80 aa)) form the BRCT domain.

This sequence belongs to the NAD-dependent DNA ligase family. LigA subfamily. It depends on Mg(2+) as a cofactor. Requires Mn(2+) as cofactor.

The enzyme catalyses NAD(+) + (deoxyribonucleotide)n-3'-hydroxyl + 5'-phospho-(deoxyribonucleotide)m = (deoxyribonucleotide)n+m + AMP + beta-nicotinamide D-nucleotide.. In terms of biological role, DNA ligase that catalyzes the formation of phosphodiester linkages between 5'-phosphoryl and 3'-hydroxyl groups in double-stranded DNA using NAD as a coenzyme and as the energy source for the reaction. It is essential for DNA replication and repair of damaged DNA. In Chlamydia caviae (strain ATCC VR-813 / DSM 19441 / 03DC25 / GPIC) (Chlamydophila caviae), this protein is DNA ligase.